Reading from the N-terminus, the 767-residue chain is Dipeptidyl peptidase 4 (767 aa).

The Cytoplasmic portion of the chain corresponds to 1–6 (MKTPWK). Residues 7 to 28 (VLLGLLGVAALVTIITVPVVLL) traverse the membrane as a helical; Signal-anchor for type II membrane protein segment. The Extracellular segment spans residues 29-767 (NKDEAAADSR…HFLQQCFSLR (739 aa)). N-linked (GlcNAc...) asparagine glycans are attached at residues N83, N90, N148, N217, N227, and N319. Cystine bridges form between C326–C337, C383–C395, C445–C448, and C455–C473. The N-linked (GlcNAc...) asparagine glycan is linked to N521. The active-site Charge relay system is S631. A disulfide bridge links C650 with C763. The N-linked (GlcNAc...) asparagine glycan is linked to N686. Catalysis depends on charge relay system residues D709 and H741.

It belongs to the peptidase S9B family. DPPIV subfamily. In terms of assembly, monomer. Homodimer. Heterodimer with Seprase (FAP). Requires homodimerization for optimal dipeptidyl peptidase activity and T-cell costimulation. Found in a membrane raft complex, at least composed of BCL10, CARD11, DPP4 and IKBKB. Associates with collagen. Interacts with PTPRC; the interaction is enhanced in an interleukin-12-dependent manner in activated lymphocytes. Interacts (via extracellular domain) with ADA; does not inhibit its dipeptidyl peptidase activity. Interacts with CAV1 (via the N-terminus); the interaction is direct. Interacts (via cytoplasmic tail) with CARD11 (via PDZ domain); its homodimerization is necessary for interaction with CARD11. Interacts with IGF2R; the interaction is direct. Interacts with GPC3. In terms of processing, the soluble form (Dipeptidyl peptidase 4 soluble form also named SDPP) derives from the membrane form (Dipeptidyl peptidase 4 membrane form also named MDPP) by proteolytic processing. Post-translationally, N- and O-Glycosylated. Phosphorylated. Mannose 6-phosphate residues in the carbohydrate moiety are necessary for interaction with IGF2R in activated T-cells. Mannose 6-phosphorylation is induced during T-cell activation. In terms of tissue distribution, expressed in bile ducts and other epithelial brush borders (small intestine, kidney, colon, pancreatic duct); acinar structures in salivary glands; endothelial structures and T cell areas in thymus, spleen and lymph node.

The protein resides in the secreted. It localises to the cell membrane. Its subcellular location is the apical cell membrane. It is found in the cell projection. The protein localises to the invadopodium membrane. The protein resides in the lamellipodium membrane. It localises to the cell junction. Its subcellular location is the membrane raft. It carries out the reaction Release of an N-terminal dipeptide, Xaa-Yaa-|-Zaa-, from a polypeptide, preferentially when Yaa is Pro, provided Zaa is neither Pro nor hydroxyproline.. With respect to regulation, inhibited by GPC3 and diprotin A. Its function is as follows. Cell surface glycoprotein receptor involved in the costimulatory signal essential for T-cell receptor (TCR)-mediated T-cell activation. Acts as a positive regulator of T-cell coactivation, by binding at least ADA, CAV1, IGF2R, and PTPRC. Its binding to CAV1 and CARD11 induces T-cell proliferation and NF-kappa-B activation in a T-cell receptor/CD3-dependent manner. Its interaction with ADA also regulates lymphocyte-epithelial cell adhesion. In association with FAP is involved in the pericellular proteolysis of the extracellular matrix (ECM), the migration and invasion of endothelial cells into the ECM. May be involved in the promotion of lymphatic endothelial cells adhesion, migration and tube formation. When overexpressed, enhanced cell proliferation, a process inhibited by GPC3. Also acts as a serine exopeptidase with a dipeptidyl peptidase activity that regulates various physiological processes by cleaving peptides in the circulation, including many chemokines, mitogenic growth factors, neuropeptides and peptide hormones. Removes N-terminal dipeptides sequentially from polypeptides having unsubstituted N-termini provided that the penultimate residue is proline. The protein is Dipeptidyl peptidase 4 (Dpp4) of Rattus norvegicus (Rat).